Reading from the N-terminus, the 28-residue chain is Alkaline serine protease NJP (28 aa).

Its activity is regulated as follows. Inhibited by PMSF. Not or very weakly inhibited by EDTA, EGTA, beta-mercaptoethanol, benzamidine, aprotinin, iodoacetic acid, pepstatin A and SBTI. Functionally, alkaline thrombin-like serine protease. Has fibrinolytic and fibrinogenolytic but not plasminogenolytic activity. Cleaves fibrinogen chains Aalpha, Bbeta and gamma chains in that order. Cleaves after Arg and Lys residues. This chain is Alkaline serine protease NJP, found in Hediste japonica (Polychaete worm).